The primary structure comprises 498 residues: ATP synthase subunit beta, chloroplastic (498 aa).

Residue 172-179 (GGAGVGKT) participates in ATP binding.

The protein belongs to the ATPase alpha/beta chains family. F-type ATPases have 2 components, CF(1) - the catalytic core - and CF(0) - the membrane proton channel. CF(1) has five subunits: alpha(3), beta(3), gamma(1), delta(1), epsilon(1). CF(0) has four main subunits: a(1), b(1), b'(1) and c(9-12).

It localises to the plastid. Its subcellular location is the chloroplast thylakoid membrane. The catalysed reaction is ATP + H2O + 4 H(+)(in) = ADP + phosphate + 5 H(+)(out). Its function is as follows. Produces ATP from ADP in the presence of a proton gradient across the membrane. The catalytic sites are hosted primarily by the beta subunits. This chain is ATP synthase subunit beta, chloroplastic, found in Solanum lycopersicum (Tomato).